The chain runs to 175 residues: Co-chaperone protein HscB homolog (175 aa).

In terms of domain architecture, J spans 8–80; the sequence is DFFSLFGLPR…LNRARYLLQL (73 aa).

This sequence belongs to the HscB family. As to quaternary structure, interacts with HscA and stimulates its ATPase activity.

Functionally, co-chaperone involved in the maturation of iron-sulfur cluster-containing proteins. Seems to help targeting proteins to be folded toward HscA. The protein is Co-chaperone protein HscB homolog of Chromobacterium violaceum (strain ATCC 12472 / DSM 30191 / JCM 1249 / CCUG 213 / NBRC 12614 / NCIMB 9131 / NCTC 9757 / MK).